Here is a 231-residue protein sequence, read N- to C-terminus: Probable transglycosylase SceD (231 aa).

The N-terminal stretch at 1–27 (MKKTLLASSLAVGLGIVAGNAGHEAHA) is a signal peptide. The segment covering 103-116 (APSAVQANQVQSQE) has biased composition (polar residues). Positions 103–153 (APSAVQANQVQSQEVEAPQNAQTQQPQASTSNNSQVTATPTESKSSEGSSV) are disordered. Residues 119-137 (APQNAQTQQPQASTSNNSQ) show a composition bias toward low complexity. Residues 138-153 (VTATPTESKSSEGSSV) are compositionally biased toward polar residues.

This sequence belongs to the transglycosylase family. SceD subfamily.

Its subcellular location is the secreted. Is able to cleave peptidoglycan and affects clumping and separation of bacterial cells. This is Probable transglycosylase SceD (sceD) from Staphylococcus aureus (strain COL).